The chain runs to 301 residues: Ribosomal RNA small subunit methyltransferase H (301 aa).

Residues 33 to 35 (GGH), aspartate 52, phenylalanine 79, aspartate 100, and glutamine 107 contribute to the S-adenosyl-L-methionine site.

The protein belongs to the methyltransferase superfamily. RsmH family.

The protein resides in the cytoplasm. The catalysed reaction is cytidine(1402) in 16S rRNA + S-adenosyl-L-methionine = N(4)-methylcytidine(1402) in 16S rRNA + S-adenosyl-L-homocysteine + H(+). Functionally, specifically methylates the N4 position of cytidine in position 1402 (C1402) of 16S rRNA. In Mycoplasmopsis synoviae (strain 53) (Mycoplasma synoviae), this protein is Ribosomal RNA small subunit methyltransferase H.